We begin with the raw amino-acid sequence, 562 residues long: Potassium voltage-gated channel subfamily V member 2 (562 aa).

A compositionally biased stretch (basic and acidic residues) spans 1-10 (MLKQSNERRW). The disordered stretch occupies residues 1–34 (MLKQSNERRWSLSYKPWSTPETEDVPNTGSNQHR). Over 1-163 (MLKQSNERRW…TDEYFFDRDP (163 aa)) the chain is Cytoplasmic. A helical membrane pass occupies residues 164 to 184 (AVFQLIYNFYTSGVLLVRDEL). The Extracellular portion of the chain corresponds to 185-269 (CPRSFLEELG…KPFSSVAAKA (85 aa)). Residues 270-290 (MGVATNLFVLISVVALALNTV) form a helical membrane-spanning segment. At 291-344 (EEMQHQAEQGTGGGDPRPILEHVEMLCVAFFTLEFLLRLASTPNLQRFARSALN) the chain is on the cytoplasmic side. Residues 345 to 365 (LVDLVAILPFYLQLLLECFTS) form a helical membrane-spanning segment. Residues 366 to 391 (EDQRHNKDSPREHDLETVGRVGKVGQ) lie on the Extracellular side of the membrane. The helical; Voltage-sensor transmembrane segment at 392–412 (VLRIMRLMRIFRILKLARHST) threads the bilayer. Over 413-427 (GLRAFGFTLRQCYQQ) the chain is Cytoplasmic. A helical transmembrane segment spans residues 428–448 (VGCLMLFITMGIFSFSAAVYS). Residues 449 to 461 (VEHDVPGTNFTSI) lie on the Extracellular side of the membrane. Asn-457 carries an N-linked (GlcNAc...) asparagine glycan. An intramembrane region (pore-forming) is located at residues 462-482 (LHAWWWAAVSISTVGYGDMYP). Positions 474–479 (TVGYGD) match the Selectivity filter motif. Residues 483 to 488 (ETHLGR) are Extracellular-facing. The helical transmembrane segment at 489–509 (LFAFLCIAFGIILNGMPISIL) threads the bilayer. The Cytoplasmic segment spans residues 510-562 (YNKFSDYYSKLKAYEYTAIRRERGKVNFMQRATKKMAECLSESHAQSTTRQEN).

It belongs to the potassium channel family. V (TC 1.A.1.2) subfamily. Kv8.2/KCNV2 sub-subfamily. In terms of assembly, heteromultimer with KCNB1, KCNC1 and KCNF1. Does not form homomultimers.

The protein localises to the cell membrane. Functionally, potassium channel subunit. Modulates channel activity by shifting the threshold and the half-maximal activation to more negative values. This chain is Potassium voltage-gated channel subfamily V member 2 (Kcnv2), found in Mus musculus (Mouse).